The sequence spans 342 residues: S-adenosyl-L-methionine-dependent tRNA 4-demethylwyosine synthase (342 aa).

[2Fe-2S] cluster-binding residues include Cys45, Cys58, and Cys71. The region spanning 64-312 (YGIHSHRCLQ…VKHLPGYHIE (249 aa)) is the Radical SAM core domain. [4Fe-4S] cluster is bound by residues Cys81, Cys85, and Cys88.

Belongs to the TYW1 family. Monomer. The cofactor is [2Fe-2S] cluster. [4Fe-4S] cluster serves as cofactor.

The protein resides in the cytoplasm. It carries out the reaction N(1)-methylguanosine(37) in tRNA(Phe) + pyruvate + S-adenosyl-L-methionine = 4-demethylwyosine(37) in tRNA(Phe) + 5'-deoxyadenosine + L-methionine + CO2 + H2O. In terms of biological role, component of the wyosine derivatives biosynthesis pathway that catalyzes the condensation of N-methylguanine with 2 carbon atoms from pyruvate to form the tricyclic 4-demethylwyosine (imG-14) on guanosine-37 of tRNA(Phe). The protein is S-adenosyl-L-methionine-dependent tRNA 4-demethylwyosine synthase of Pyrococcus horikoshii (strain ATCC 700860 / DSM 12428 / JCM 9974 / NBRC 100139 / OT-3).